An 88-amino-acid chain; its full sequence is Small ribosomal subunit protein uS17 (88 aa).

The protein belongs to the universal ribosomal protein uS17 family. As to quaternary structure, part of the 30S ribosomal subunit.

Its function is as follows. One of the primary rRNA binding proteins, it binds specifically to the 5'-end of 16S ribosomal RNA. This Stutzerimonas stutzeri (strain A1501) (Pseudomonas stutzeri) protein is Small ribosomal subunit protein uS17.